A 380-amino-acid polypeptide reads, in one-letter code: MTVNLGMPTPPIPTLAPRRKTHQIKVGDVLVGGDAPISVQSMTTTKTHDVGATLQQIAALTAAGCDIVRVACPTDKDAEVLPIIAKRSQIPVIADIHFQPKYVFQAIEAGCGAVRVNPGNIRKFDDQIESICQAATEHGTSIRIGVNAGSLDKRLLDKYGAPTAEAMVESALWEASLFEQYGFRDFKISVKHHDPVVMIRAYEQLAAKCDYPLHLGVTEAGPAFQGTIKSAVAFGHLLAEGIGDTIRVSLSADPVEEVKVGIKILESLNLRPRGLEIVSCPSCGRCQVDVLTLANDVTDALEGIDAPLRVAVMGCVVNGLGEGREADLGVAAGNGKGKIFKHGEVIRTVPEGEIVQFLVQEANRMADEMDTTGAVEVTVS.

[4Fe-4S] cluster contacts are provided by C280, C283, C315, and E322.

It belongs to the IspG family. It depends on [4Fe-4S] cluster as a cofactor.

The catalysed reaction is (2E)-4-hydroxy-3-methylbut-2-enyl diphosphate + oxidized [flavodoxin] + H2O + 2 H(+) = 2-C-methyl-D-erythritol 2,4-cyclic diphosphate + reduced [flavodoxin]. The protein operates within isoprenoid biosynthesis; isopentenyl diphosphate biosynthesis via DXP pathway; isopentenyl diphosphate from 1-deoxy-D-xylulose 5-phosphate: step 5/6. Converts 2C-methyl-D-erythritol 2,4-cyclodiphosphate (ME-2,4cPP) into 1-hydroxy-2-methyl-2-(E)-butenyl 4-diphosphate. The protein is 4-hydroxy-3-methylbut-2-en-1-yl diphosphate synthase (flavodoxin) of Cutibacterium acnes (strain DSM 16379 / KPA171202) (Propionibacterium acnes).